The primary structure comprises 93 residues: Cell division topological specificity factor (93 aa).

The protein belongs to the MinE family.

Functionally, prevents the cell division inhibition by proteins MinC and MinD at internal division sites while permitting inhibition at polar sites. This ensures cell division at the proper site by restricting the formation of a division septum at the midpoint of the long axis of the cell. This is Cell division topological specificity factor from Agathobacter rectalis (strain ATCC 33656 / DSM 3377 / JCM 17463 / KCTC 5835 / VPI 0990) (Eubacterium rectale).